The chain runs to 200 residues: Protein GrpE (200 aa).

This sequence belongs to the GrpE family. As to quaternary structure, homodimer.

It localises to the cytoplasm. In terms of biological role, participates actively in the response to hyperosmotic and heat shock by preventing the aggregation of stress-denatured proteins, in association with DnaK and GrpE. It is the nucleotide exchange factor for DnaK and may function as a thermosensor. Unfolded proteins bind initially to DnaJ; upon interaction with the DnaJ-bound protein, DnaK hydrolyzes its bound ATP, resulting in the formation of a stable complex. GrpE releases ADP from DnaK; ATP binding to DnaK triggers the release of the substrate protein, thus completing the reaction cycle. Several rounds of ATP-dependent interactions between DnaJ, DnaK and GrpE are required for fully efficient folding. The polypeptide is Protein GrpE (Mycoplasma mycoides subsp. mycoides SC (strain CCUG 32753 / NCTC 10114 / PG1)).